The sequence spans 213 residues: Ribonuclease HII (213 aa).

The RNase H type-2 domain maps to 1-213; sequence MKIIGIDEAG…SWKTAQKFIQ (213 aa). Positions 7, 8, and 105 each coordinate a divalent metal cation.

It belongs to the RNase HII family. Mn(2+) serves as cofactor. The cofactor is Mg(2+).

It localises to the cytoplasm. The enzyme catalyses Endonucleolytic cleavage to 5'-phosphomonoester.. Endonuclease that specifically degrades the RNA of RNA-DNA hybrids. The protein is Ribonuclease HII of Methanococcoides burtonii (strain DSM 6242 / NBRC 107633 / OCM 468 / ACE-M).